The chain runs to 171 residues: Adenine phosphoribosyltransferase (171 aa).

This sequence belongs to the purine/pyrimidine phosphoribosyltransferase family. Homodimer.

It localises to the cytoplasm. The enzyme catalyses AMP + diphosphate = 5-phospho-alpha-D-ribose 1-diphosphate + adenine. The protein operates within purine metabolism; AMP biosynthesis via salvage pathway; AMP from adenine: step 1/1. Its function is as follows. Catalyzes a salvage reaction resulting in the formation of AMP, that is energically less costly than de novo synthesis. The polypeptide is Adenine phosphoribosyltransferase (Prochlorococcus marinus (strain MIT 9515)).